The sequence spans 351 residues: tRNA-splicing endonuclease (351 aa).

Catalysis depends on residues Tyr-287, His-298, and Lys-329.

This sequence belongs to the tRNA-intron endonuclease family. Archaeal long subfamily. Homodimer.

It catalyses the reaction pretRNA = a 3'-half-tRNA molecule with a 5'-OH end + a 5'-half-tRNA molecule with a 2',3'-cyclic phosphate end + an intron with a 2',3'-cyclic phosphate and a 5'-hydroxyl terminus.. In terms of biological role, endonuclease that removes tRNA introns. Cleaves pre-tRNA at the 5'- and 3'-splice sites to release the intron. The products are an intron and two tRNA half-molecules bearing 2',3' cyclic phosphate and 5'-OH termini. Recognizes a pseudosymmetric substrate in which 2 bulged loops of 3 bases are separated by a stem of 4 bp. The sequence is that of tRNA-splicing endonuclease from Methanococcoides burtonii (strain DSM 6242 / NBRC 107633 / OCM 468 / ACE-M).